The chain runs to 249 residues: Short-chain dehydrogenase virB (249 aa).

The NADP(+) site is built by Ile16, Arg104, Tyr150, Lys154, Val183, and Thr185. Catalysis depends on Tyr150, which acts as the Proton donor. The active-site Lowers pKa of active site Tyr is Lys154.

This sequence belongs to the short-chain dehydrogenases/reductases (SDR) family.

The protein operates within secondary metabolite biosynthesis. Functionally, short-chain dehydrogenase; part of the gene cluster that mediates the biosynthesis of virensols and trichoxide, fungal natural products that contain or are derived from a salicylaldehyde core. The pathway begins with the synthesis of the reduced chain in virensol C by the highly reducing polyketide synthase virA via condensation of one acetate and 8 malonate units. VirA has interesting programming rules since the first 2 ketides are fully reduced, the 3 following ketides undergo beta-dehydration, and the last 3 ketides are only reduced to beta-hydroxys to yield the trihydroxy portion. The production of aldehyde virensol C by virA alone is surprising, since virA does not contain a reductase (R) domain that is typically associated with reductive product release in HRPKS. The cupin-domain enzyme virC is involved in enhancing virA product turnover. The short-chain dehydrogenase virB then oxidizes the C-7 alcohol of virensol C to a ketone, yielding virensol D. Virensol D is further transformed to salicylaldehyde 5-deoxyaurocitrin by the short-chain dehydrogenase virD. VirD catalyzes the dehydrogenation of C-3 to form the beta-ketone aldehyde, which is followed by the generation of the nucleophilic C-2 that is required for the intramolecular aldol condensation between C-2 and C-7, itself followed by dehydration and aromatization which leads to salicylaldehyde 5-deoxyaurocitrin. While the dehydrogenation of virensol D is definitely catalyzed by virD, the aldol condensation and dehydration may be uncatalyzed or assisted by virD. The short chain dehydrogenase virG then converts salicylaldehyde 5-deoxyaurocitrin into virensol B which is further hydroxylated by the cytochrome P450 monooxygenase virE to yield the hydroquinone virensol A. VirI then may oxidize virensol A to form the quinone, while virH performs the epoxidation. Finally, the two remaining short-chain dehydrogenases, virK and virL, are probably responsible for reducing the ketones to the corresponding alcohols to furnish the epoxycyclohexanol structure in trichoxide. The polypeptide is Short-chain dehydrogenase virB (Hypocrea virens (strain Gv29-8 / FGSC 10586) (Gliocladium virens)).